The following is a 228-amino-acid chain: tRNA (guanine-N(1)-)-methyltransferase (228 aa).

Residues glycine 111 and leucine 135–leucine 140 contribute to the S-adenosyl-L-methionine site.

The protein belongs to the RNA methyltransferase TrmD family. In terms of assembly, homodimer.

It is found in the cytoplasm. The enzyme catalyses guanosine(37) in tRNA + S-adenosyl-L-methionine = N(1)-methylguanosine(37) in tRNA + S-adenosyl-L-homocysteine + H(+). Its function is as follows. Specifically methylates guanosine-37 in various tRNAs. The polypeptide is tRNA (guanine-N(1)-)-methyltransferase (Clavibacter sepedonicus (Clavibacter michiganensis subsp. sepedonicus)).